The following is a 184-amino-acid chain: ATP synthase subunit b, chloroplastic (184 aa).

Residues 31 to 53 (LINLGIVISLLIYFGKGVLSNLL) traverse the membrane as a helical segment.

Belongs to the ATPase B chain family. In terms of assembly, F-type ATPases have 2 components, F(1) - the catalytic core - and F(0) - the membrane proton channel. F(1) has five subunits: alpha(3), beta(3), gamma(1), delta(1), epsilon(1). F(0) has four main subunits: a(1), b(1), b'(1) and c(10-14). The alpha and beta chains form an alternating ring which encloses part of the gamma chain. F(1) is attached to F(0) by a central stalk formed by the gamma and epsilon chains, while a peripheral stalk is formed by the delta, b and b' chains.

It is found in the plastid. It localises to the chloroplast thylakoid membrane. F(1)F(0) ATP synthase produces ATP from ADP in the presence of a proton or sodium gradient. F-type ATPases consist of two structural domains, F(1) containing the extramembraneous catalytic core and F(0) containing the membrane proton channel, linked together by a central stalk and a peripheral stalk. During catalysis, ATP synthesis in the catalytic domain of F(1) is coupled via a rotary mechanism of the central stalk subunits to proton translocation. Functionally, component of the F(0) channel, it forms part of the peripheral stalk, linking F(1) to F(0). The sequence is that of ATP synthase subunit b, chloroplastic from Aneura mirabilis (Parasitic liverwort).